The sequence spans 394 residues: MSREMQDVDLAEVKPLVEKGETITGLLQEFDVQEQDIETLHGSVHVTLCGTPKGNRPVILTYHDIGMNHKTCYNPLFNYEDMQEITQHFAVCHVDAPGQQDGAASFPAGYMYPSMDQLAEMLPGVLQQFGLKSIIGMGTGAGAYILTRFALNNPEMVEGLVLINVNPCAEGWMDWAASKISGWTQALPDMVVSHLFGKEEMQSNVEVVHTYRQHIVNDMNPGNLHLFINAYNSRRDLEIERPMPGTHTVTLQCPALLVVGDSSPAVDAVVECNSKLDPTKTTLLKMADCGGLPQISQPAKLAEAFKYFVQGMGYMPSASMTRLMRSRTASGSSVTSLDGTRSRSHTSEGTRSRSHTSEGTRSRSHTSEGAHLDITPNSGAAGNSAGPKSMEVSC.

Serine 2 carries the N-acetylserine modification. Serine 2, serine 319, and serine 326 each carry phosphoserine. A disordered region spans residues 325-394 (RSRTASGSSV…AGPKSMEVSC (70 aa)). Positions 327 to 339 (RTASGSSVTSLDG) are enriched in polar residues. Threonine 328 is modified (phosphothreonine; by SGK1). Serine 330 and serine 332 each carry phosphoserine; by SGK1. A Phosphoserine modification is found at serine 333. A Phosphothreonine modification is found at threonine 335. Serine 336 carries the phosphoserine modification. 3 repeat units span residues 339–348 (GTRSRSHTSE), 349–358 (GTRSRSHTSE), and 359–368 (GTRSRSHTSE). The 3 X 10 AA tandem repeats of G-T-R-S-R-S-H-T-S-E stretch occupies residues 339–368 (GTRSRSHTSEGTRSRSHTSEGTRSRSHTSE). Threonine 340 carries the phosphothreonine modification. Phosphoserine is present on serine 342. Over residues 345-371 (HTSEGTRSRSHTSEGTRSRSHTSEGAH) the composition is skewed to basic and acidic residues. Position 346 is a phosphothreonine; by SGK1 (threonine 346). Serine 352 bears the Phosphoserine mark. The residue at position 356 (threonine 356) is a Phosphothreonine; by SGK1. The residue at position 362 (serine 362) is a Phosphoserine. Residue serine 364 is modified to Phosphoserine; by SGK1. At threonine 366 the chain carries Phosphothreonine; by SGK1. At threonine 375 the chain carries Phosphothreonine.

Belongs to the NDRG family. As to quaternary structure, interacts with RAB4A (membrane-bound form); the interaction involves NDRG1 in vesicular recycling of CDH1. In terms of processing, under stress conditions, phosphorylated in the C-terminal on many serine and threonine residues. Phosphorylated in vitro by PKA. Phosphorylation enhanced by increased intracellular cAMP levels. Homocysteine induces dephosphorylation. Phosphorylation by SGK1 is cell cycle dependent. In terms of tissue distribution, ubiquitous; expressed most prominently in placental membranes and prostate, kidney, small intestine, and ovary tissues. Also expressed in heart, brain, skeletal muscle, lung, liver and pancreas. Low levels in peripheral blood leukocytes and in tissues of the immune system. Expressed mainly in epithelial cells. Also found in Schwann cells of peripheral neurons. Reduced expression in adenocarcinomas compared to normal tissues. In colon, prostate and placental membranes, the cells that border the lumen show the highest expression.

It localises to the cytoplasm. Its subcellular location is the cytosol. The protein localises to the cytoskeleton. It is found in the microtubule organizing center. The protein resides in the centrosome. It localises to the nucleus. Its subcellular location is the cell membrane. Functionally, stress-responsive protein involved in hormone responses, cell growth, and differentiation. Acts as a tumor suppressor in many cell types. Necessary but not sufficient for p53/TP53-mediated caspase activation and apoptosis. Has a role in cell trafficking, notably of the Schwann cell, and is necessary for the maintenance and development of the peripheral nerve myelin sheath. Required for vesicular recycling of CDH1 and TF. May also function in lipid trafficking. Protects cells from spindle disruption damage. Functions in p53/TP53-dependent mitotic spindle checkpoint. Regulates microtubule dynamics and maintains euploidy. This is Protein NDRG1 (NDRG1) from Homo sapiens (Human).